Here is a 71-residue protein sequence, read N- to C-terminus: Paralithocin 2 (71 aa).

The N-terminal stretch at methionine 1 to glycine 23 is a signal peptide. 4 disulfide bridges follow: cysteine 29–cysteine 58, cysteine 34–cysteine 54, cysteine 39–cysteine 52, and cysteine 44–cysteine 55. Position 70 is an arginine amide; partial (arginine 70).

This sequence belongs to the paralithocin family. In terms of processing, the amidated form is probably the active form.

Has antibacterial activity, mainly against marine Gram-positive bacteria like C.maltaromaticum (MIC=50 uM), C.mobile (MIC=50 uM), C.divergens (MIC=50 uM) and C.funditum (MIC=25 uM) but also against C.glutamicum (MIC=12.5 uM). Has very little or no activity against Gram-negative bacteria. In Paralithodes camtschaticus (Red king crab), this protein is Paralithocin 2.